The sequence spans 556 residues: Formate--tetrahydrofolate ligase (556 aa).

Residue 65–72 (TPAGEGKT) coordinates ATP.

The protein belongs to the formate--tetrahydrofolate ligase family.

The catalysed reaction is (6S)-5,6,7,8-tetrahydrofolate + formate + ATP = (6R)-10-formyltetrahydrofolate + ADP + phosphate. It functions in the pathway one-carbon metabolism; tetrahydrofolate interconversion. The protein is Formate--tetrahydrofolate ligase of Proteus mirabilis (strain HI4320).